Here is a 496-residue protein sequence, read N- to C-terminus: Cytochrome P450 71D180 (496 aa).

Residues 1 to 21 (MDISISWVVIIVFVLSYLILM) form a helical; Signal-anchor for type II membrane protein membrane-spanning segment. A heme-binding site is contributed by Cys435. Residues 471–496 (MSETPGLSGPRKNPLIMIPTIHNPTS) are disordered.

This sequence belongs to the cytochrome P450 family. Heme serves as cofactor.

It is found in the membrane. The enzyme catalyses gamma-terpinene + 2 reduced [NADPH--hemoprotein reductase] + 2 O2 = carvacrol + 2 oxidized [NADPH--hemoprotein reductase] + 3 H2O + 2 H(+). It carries out the reaction (4S)-limonene + reduced [NADPH--hemoprotein reductase] + O2 = (1S,5R)-carveol + oxidized [NADPH--hemoprotein reductase] + H2O + H(+). It catalyses the reaction (4R)-limonene + reduced [NADPH--hemoprotein reductase] + O2 = (1R,5S)-carveol + oxidized [NADPH--hemoprotein reductase] + H2O + H(+). Its pathway is secondary metabolite biosynthesis; terpenoid biosynthesis. Its function is as follows. Involved in the biosynthesis of phenolic monoterpenes natural products thymol and carvacrol which have a broad range of biological activities acting as antimicrobial compounds, insecticides, antioxidants and pharmaceutical agents. Catalyzes the C2-hydroxylation of gamma-terpinene to produce carvacrol. Mediates also the C6-hydroxylation of (4S)-limonene and (4R)-limonene to form carveol. The sequence is that of Cytochrome P450 71D180 from Origanum majorana (Sweet marjoram).